The chain runs to 342 residues: Phospho-N-acetylmuramoyl-pentapeptide-transferase (342 aa).

10 consecutive transmembrane segments (helical) span residues 8–28, 58–78, 86–106, 116–136, 152–172, 184–204, 213–233, 242–262, 267–287, and 318–338; these read VAQPYFCSFLLSTILGFVIAP, GIPSMGGVIILLPCILSTAIF, IWVILTTMVAFAILGGVDDYL, ISLEAKLFAQLLIASAALIFL, GLIDLGWAYMPFAYIVVVGSS, LATLPIITSTAILGIIGHLSL, VVGANIPIFCSALVGSALSFL, VFMGDLGSLSLGASLGLMSVM, FIYAISGCIFVAEAISSMAQV, and IVTRAWVIAMVSFVVSLAAII.

The protein belongs to the glycosyltransferase 4 family. MraY subfamily. Mg(2+) is required as a cofactor.

It localises to the cell inner membrane. It carries out the reaction UDP-N-acetyl-alpha-D-muramoyl-L-alanyl-gamma-D-glutamyl-meso-2,6-diaminopimeloyl-D-alanyl-D-alanine + di-trans,octa-cis-undecaprenyl phosphate = di-trans,octa-cis-undecaprenyl diphospho-N-acetyl-alpha-D-muramoyl-L-alanyl-D-glutamyl-meso-2,6-diaminopimeloyl-D-alanyl-D-alanine + UMP. It functions in the pathway cell wall biogenesis; peptidoglycan biosynthesis. Functionally, catalyzes the initial step of the lipid cycle reactions in the biosynthesis of the cell wall peptidoglycan: transfers peptidoglycan precursor phospho-MurNAc-pentapeptide from UDP-MurNAc-pentapeptide onto the lipid carrier undecaprenyl phosphate, yielding undecaprenyl-pyrophosphoryl-MurNAc-pentapeptide, known as lipid I. The chain is Phospho-N-acetylmuramoyl-pentapeptide-transferase from Anaplasma marginale (strain Florida).